A 526-amino-acid polypeptide reads, in one-letter code: Glucomannan 4-beta-mannosyltransferase 1 (526 aa).

Residues 31–51 (VIIPLLKLAVIVCSVMSIMLF) form a helical membrane-spanning segment. Aspartate 130 is a catalytic residue. Substrate is bound by residues aspartate 189 and aspartate 191. Residue aspartate 283 is part of the active site. Transmembrane regions (helical) follow at residues 362–382 (IVAHWVTFFFYCIVIPACVIV), 399–419 (ITILNAVSTPRSMHLLVLWIL), 477–497 (PLEIIVGMYMLHCATYDLLFG), and 501–521 (FFVYLLLQAGAFFTMGFGLVG).

This sequence belongs to the glycosyltransferase 2 family. Plant cellulose synthase-like A subfamily.

Its subcellular location is the golgi apparatus membrane. The enzyme catalyses GDP-mannose + (glucomannan)n = GDP + (glucomannan)n+1.. Functionally, possesses 4-beta-mannosyltransferase activity on mannan using GDP-mannose. The beta-1,4-mannan product is the backbone for galactomannan synthesis by galactomannan galactosyltransferase. The galactomannan is a hemicellulosic storage polysaccharide accumulated in the form of secondary wall thickenings in the seed endosperm. In Cyamopsis tetragonoloba (Guar), this protein is Glucomannan 4-beta-mannosyltransferase 1.